Consider the following 114-residue polypeptide: Large ribosomal subunit protein uL22 (114 aa).

It belongs to the universal ribosomal protein uL22 family. Part of the 50S ribosomal subunit.

Functionally, this protein binds specifically to 23S rRNA; its binding is stimulated by other ribosomal proteins, e.g. L4, L17, and L20. It is important during the early stages of 50S assembly. It makes multiple contacts with different domains of the 23S rRNA in the assembled 50S subunit and ribosome. In terms of biological role, the globular domain of the protein is located near the polypeptide exit tunnel on the outside of the subunit, while an extended beta-hairpin is found that lines the wall of the exit tunnel in the center of the 70S ribosome. In Ehrlichia ruminantium (strain Gardel), this protein is Large ribosomal subunit protein uL22.